We begin with the raw amino-acid sequence, 461 residues long: Photosystem II CP43 reaction center protein (461 aa).

The propeptide occupies 1 to 2; it reads ME. T3 carries the post-translational modification N-acetylthreonine. Phosphothreonine is present on T3. 5 helical membrane-spanning segments follow: residues 57–81, 122–143, 166–188, 243–263, and 279–300; these read LFEVAHFVPEKPMYEQGLILLPHLA, LIGPETLEETFPFFGYTWKDKN, KAMYFGGVYDTWAPGGGDTRIIT, QPWAWTRRAFVWSGEAYLSYS, and WFNNTAYPSEFYGPTGPEASQS. Position 355 (E355) interacts with [CaMn4O5] cluster. Residues 435–459 traverse the membrane as a helical segment; it reads RARAAAAGFEKGIDRLTEPVLSLKP.

The protein belongs to the PsbB/PsbC family. PsbC subfamily. In terms of assembly, PSII is composed of 1 copy each of membrane proteins PsbA, PsbB, PsbC, PsbD, PsbE, PsbF, PsbH, PsbI, PsbJ, PsbK, PsbL, PsbM, PsbT, PsbX, PsbY, PsbZ, Psb30/Ycf12, at least 3 peripheral proteins of the oxygen-evolving complex and a large number of cofactors. It forms dimeric complexes. It depends on Binds multiple chlorophylls and provides some of the ligands for the Ca-4Mn-5O cluster of the oxygen-evolving complex. It may also provide a ligand for a Cl- that is required for oxygen evolution. PSII binds additional chlorophylls, carotenoids and specific lipids. as a cofactor.

Its subcellular location is the plastid. The protein resides in the chloroplast thylakoid membrane. In terms of biological role, one of the components of the core complex of photosystem II (PSII). It binds chlorophyll and helps catalyze the primary light-induced photochemical processes of PSII. PSII is a light-driven water:plastoquinone oxidoreductase, using light energy to abstract electrons from H(2)O, generating O(2) and a proton gradient subsequently used for ATP formation. In Stigeoclonium helveticum (Green alga), this protein is Photosystem II CP43 reaction center protein.